A 308-amino-acid chain; its full sequence is Quinolinate synthase (308 aa).

Positions 21 and 38 each coordinate iminosuccinate. Cys83 serves as a coordination point for [4Fe-4S] cluster. Iminosuccinate-binding positions include 109 to 111 and Ser126; that span reads YIN. Cys170 provides a ligand contact to [4Fe-4S] cluster. Iminosuccinate contacts are provided by residues 196-198 and Thr213; that span reads HPE. Cys263 provides a ligand contact to [4Fe-4S] cluster.

It belongs to the quinolinate synthase family. Type 2 subfamily. [4Fe-4S] cluster is required as a cofactor.

The protein resides in the cytoplasm. The catalysed reaction is iminosuccinate + dihydroxyacetone phosphate = quinolinate + phosphate + 2 H2O + H(+). It participates in cofactor biosynthesis; NAD(+) biosynthesis; quinolinate from iminoaspartate: step 1/1. In terms of biological role, catalyzes the condensation of iminoaspartate with dihydroxyacetone phosphate to form quinolinate. This chain is Quinolinate synthase, found in Sulfurisphaera tokodaii (strain DSM 16993 / JCM 10545 / NBRC 100140 / 7) (Sulfolobus tokodaii).